Here is an 89-residue protein sequence, read N- to C-terminus: Small ribosomal subunit protein uS15 (89 aa).

Residues 1 to 10 are compositionally biased toward basic and acidic residues; the sequence is MSITAERKAE. The tract at residues 1–24 is disordered; that stretch reads MSITAERKAEVIQGNANKAGDTGS.

It belongs to the universal ribosomal protein uS15 family. In terms of assembly, part of the 30S ribosomal subunit. Forms a bridge to the 50S subunit in the 70S ribosome, contacting the 23S rRNA.

In terms of biological role, one of the primary rRNA binding proteins, it binds directly to 16S rRNA where it helps nucleate assembly of the platform of the 30S subunit by binding and bridging several RNA helices of the 16S rRNA. Its function is as follows. Forms an intersubunit bridge (bridge B4) with the 23S rRNA of the 50S subunit in the ribosome. In Rhodopseudomonas palustris (strain HaA2), this protein is Small ribosomal subunit protein uS15.